Reading from the N-terminus, the 584-residue chain is ETHYLENE INSENSITIVE 3-like 1 protein (584 aa).

Residues 41 to 74 (YTDDEMDVDELEKRMWRDKMRLKRLKEQQSKCKE) are a coiled coil. Basic and acidic residues predominate over residues 67–80 (EQQSKCKEGVDGSK). 2 disordered regions span residues 67–93 (EQQSKCKEGVDGSKQRQSQEQARRKKM) and 565–584 (EGMGKQQQQQQQQQDVSIWF).

The protein belongs to the EIN3 family. Acts as a homodimer to bind the primary ethylene response element.

The protein localises to the nucleus. Functionally, probable transcription factor acting as a positive regulator in the ethylene response pathway. Could bind the primary ethylene response element present in the ETHYLENE-RESPONSE-FACTOR1 promoter. In Arabidopsis thaliana (Mouse-ear cress), this protein is ETHYLENE INSENSITIVE 3-like 1 protein (EIL1).